The chain runs to 182 residues: ATP synthase subunit delta (182 aa).

Belongs to the ATPase delta chain family. As to quaternary structure, F-type ATPases have 2 components, F(1) - the catalytic core - and F(0) - the membrane proton channel. F(1) has five subunits: alpha(3), beta(3), gamma(1), delta(1), epsilon(1). CF(0) has four main subunits: a(1), b(1), b'(1) and c(10-14). The alpha and beta chains form an alternating ring which encloses part of the gamma chain. F(1) is attached to F(0) by a central stalk formed by the gamma and epsilon chains, while a peripheral stalk is formed by the delta, b and b' chains.

It is found in the cellular thylakoid membrane. F(1)F(0) ATP synthase produces ATP from ADP in the presence of a proton or sodium gradient. F-type ATPases consist of two structural domains, F(1) containing the extramembraneous catalytic core and F(0) containing the membrane proton channel, linked together by a central stalk and a peripheral stalk. During catalysis, ATP synthesis in the catalytic domain of F(1) is coupled via a rotary mechanism of the central stalk subunits to proton translocation. Functionally, this protein is part of the stalk that links CF(0) to CF(1). It either transmits conformational changes from CF(0) to CF(1) or is implicated in proton conduction. The chain is ATP synthase subunit delta from Microcystis aeruginosa (strain NIES-843 / IAM M-2473).